A 146-amino-acid chain; its full sequence is D-aminoacyl-tRNA deacylase (146 aa).

The Gly-cisPro motif, important for rejection of L-amino acids signature appears at 137 to 138 (GP).

The protein belongs to the DTD family. As to quaternary structure, homodimer.

The protein resides in the cytoplasm. It catalyses the reaction glycyl-tRNA(Ala) + H2O = tRNA(Ala) + glycine + H(+). It carries out the reaction a D-aminoacyl-tRNA + H2O = a tRNA + a D-alpha-amino acid + H(+). In terms of biological role, an aminoacyl-tRNA editing enzyme that deacylates mischarged D-aminoacyl-tRNAs. Also deacylates mischarged glycyl-tRNA(Ala), protecting cells against glycine mischarging by AlaRS. Acts via tRNA-based rather than protein-based catalysis; rejects L-amino acids rather than detecting D-amino acids in the active site. By recycling D-aminoacyl-tRNA to D-amino acids and free tRNA molecules, this enzyme counteracts the toxicity associated with the formation of D-aminoacyl-tRNA entities in vivo and helps enforce protein L-homochirality. In Bacillus cereus (strain ATCC 14579 / DSM 31 / CCUG 7414 / JCM 2152 / NBRC 15305 / NCIMB 9373 / NCTC 2599 / NRRL B-3711), this protein is D-aminoacyl-tRNA deacylase.